The primary structure comprises 379 residues: Chaperone protein DnaJ (379 aa).

Residues 6–71 (DYYEVLGVDK…QKRSRYDQFG (66 aa)) form the J domain. The CR-type zinc-finger motif lies at 138-220 (GVEREINVSK…CNGKGRLRST (83 aa)). Zn(2+) is bound by residues Cys151, Cys154, Cys168, Cys171, Cys194, Cys197, Cys208, and Cys211. CXXCXGXG motif repeat units lie at residues 151–158 (CSKCTGSG), 168–175 (CNHCNGTG), 194–201 (CDACKGEG), and 208–215 (CPACNGKG).

It belongs to the DnaJ family. As to quaternary structure, homodimer. Requires Zn(2+) as cofactor.

The protein localises to the cytoplasm. In terms of biological role, participates actively in the response to hyperosmotic and heat shock by preventing the aggregation of stress-denatured proteins and by disaggregating proteins, also in an autonomous, DnaK-independent fashion. Unfolded proteins bind initially to DnaJ; upon interaction with the DnaJ-bound protein, DnaK hydrolyzes its bound ATP, resulting in the formation of a stable complex. GrpE releases ADP from DnaK; ATP binding to DnaK triggers the release of the substrate protein, thus completing the reaction cycle. Several rounds of ATP-dependent interactions between DnaJ, DnaK and GrpE are required for fully efficient folding. Also involved, together with DnaK and GrpE, in the DNA replication of plasmids through activation of initiation proteins. The polypeptide is Chaperone protein DnaJ (Ruminiclostridium cellulolyticum (strain ATCC 35319 / DSM 5812 / JCM 6584 / H10) (Clostridium cellulolyticum)).